The following is a 795-amino-acid chain: Antibiotic resistant DNA gyrase subunit B (795 aa).

Positions 421–536 (SELYLVEGNS…RGYIYIAQPP (116 aa)) constitute a Toprim domain. Mg(2+) is bound by residues Glu-427, Asp-501, and Asp-503.

This sequence belongs to the type II topoisomerase GyrB family. As to quaternary structure, heterotetramer, composed of two GyrA and two GyrB chains. In the heterotetramer, GyrA contains the active site tyrosine that forms a transient covalent intermediate with DNA, while GyrB binds cofactors and catalyzes ATP hydrolysis. Mg(2+) serves as cofactor. Mn(2+) is required as a cofactor. It depends on Ca(2+) as a cofactor.

It localises to the cytoplasm. The catalysed reaction is ATP-dependent breakage, passage and rejoining of double-stranded DNA.. In terms of biological role, a type II topoisomerase that negatively supercoils closed circular double-stranded (ds) DNA in an ATP-dependent manner to modulate DNA topology and maintain chromosomes in an underwound state. Negative supercoiling favors strand separation, and DNA replication, transcription, recombination and repair, all of which involve strand separation. Also able to catalyze the interconversion of other topological isomers of dsDNA rings, including catenanes and knotted rings. Type II topoisomerases break and join 2 DNA strands simultaneously in an ATP-dependent manner. The sequence is that of Antibiotic resistant DNA gyrase subunit B from Neisseria gonorrhoeae.